The following is a 219-amino-acid chain: UPF0502 protein Gura_3445 (219 aa).

The disordered stretch occupies residues 162-181 (AGEPDLPDDTPAPPPEPARQ).

This sequence belongs to the UPF0502 family.

The sequence is that of UPF0502 protein Gura_3445 from Geotalea uraniireducens (strain Rf4) (Geobacter uraniireducens).